A 278-amino-acid chain; its full sequence is Dermonecrotic toxin LspiSicTox-betaIE2ii (278 aa).

His5 is an active-site residue. 2 residues coordinate Mg(2+): Glu25 and Asp27. The Nucleophile role is filled by His41. 2 disulfides stabilise this stretch: Cys45/Cys51 and Cys47/Cys190. Asp85 is a Mg(2+) binding site.

Belongs to the arthropod phospholipase D family. Class II subfamily. The cofactor is Mg(2+). As to expression, expressed by the venom gland.

The protein localises to the secreted. It catalyses the reaction an N-(acyl)-sphingosylphosphocholine = an N-(acyl)-sphingosyl-1,3-cyclic phosphate + choline. The catalysed reaction is an N-(acyl)-sphingosylphosphoethanolamine = an N-(acyl)-sphingosyl-1,3-cyclic phosphate + ethanolamine. The enzyme catalyses a 1-acyl-sn-glycero-3-phosphocholine = a 1-acyl-sn-glycero-2,3-cyclic phosphate + choline. It carries out the reaction a 1-acyl-sn-glycero-3-phosphoethanolamine = a 1-acyl-sn-glycero-2,3-cyclic phosphate + ethanolamine. Functionally, dermonecrotic toxins cleave the phosphodiester linkage between the phosphate and headgroup of certain phospholipids (sphingolipid and lysolipid substrates), forming an alcohol (often choline) and a cyclic phosphate. This toxin acts on sphingomyelin (SM). It may also act on ceramide phosphoethanolamine (CPE), lysophosphatidylcholine (LPC) and lysophosphatidylethanolamine (LPE), but not on lysophosphatidylserine (LPS), and lysophosphatidylglycerol (LPG). It acts by transphosphatidylation, releasing exclusively cyclic phosphate products as second products. Induces dermonecrosis, hemolysis, increased vascular permeability, edema, inflammatory response, and platelet aggregation. This Loxosceles spinulosa (Recluse spider) protein is Dermonecrotic toxin LspiSicTox-betaIE2ii.